Reading from the N-terminus, the 104-residue chain is Large ribosomal subunit protein bL27 (104 aa).

Positions 1–15 are excised as a propeptide; sequence MNNKYFLTKIDLQFF.

It belongs to the bacterial ribosomal protein bL27 family. In terms of processing, the N-terminus is cleaved by ribosomal processing cysteine protease Prp.

This is Large ribosomal subunit protein bL27 from Mycoplasma pneumoniae (strain ATCC 29342 / M129 / Subtype 1) (Mycoplasmoides pneumoniae).